Consider the following 448-residue polypeptide: Signal recognition particle 54 kDa protein (448 aa).

GTP contacts are provided by residues 107 to 114 (GIQGSGKT), 189 to 193 (DTAGR), and 247 to 250 (TKLD).

Belongs to the GTP-binding SRP family. SRP54 subfamily. In terms of assembly, part of the signal recognition particle protein translocation system, which is composed of SRP and FtsY. Archaeal SRP consists of a 7S RNA molecule of 300 nucleotides and two protein subunits: SRP54 and SRP19.

The protein localises to the cytoplasm. The catalysed reaction is GTP + H2O = GDP + phosphate + H(+). Functionally, involved in targeting and insertion of nascent membrane proteins into the cytoplasmic membrane. Binds to the hydrophobic signal sequence of the ribosome-nascent chain (RNC) as it emerges from the ribosomes. The SRP-RNC complex is then targeted to the cytoplasmic membrane where it interacts with the SRP receptor FtsY. This Thermococcus gammatolerans (strain DSM 15229 / JCM 11827 / EJ3) protein is Signal recognition particle 54 kDa protein.